A 553-amino-acid polypeptide reads, in one-letter code: Telomere repeat-binding protein 2 (553 aa).

Residues 147–170 (SSTEVGACGNGSPNESRDDVNLFS) are disordered. The 80-residue stretch at 285–364 (VKLRIKSFRV…HLDSLGFSLE (80 aa)) folds into the Ubiquitin-like domain. Positions 394–413 (ALDSSHEPEPSPADSFGKLG) are disordered. The HTH myb-type domain occupies 448–507 (AQRRIRRPFSVTEVEALVQAVEKLGTGRWRDVKVRAFEDADHRTYVDLKDKWKTLVHTAR). The H-T-H motif DNA-binding region spans 476–503 (WRDVKVRAFEDADHRTYVDLKDKWKTLV).

Homodimer and heterodimer with TRP1. Interacts with SNL1. As to expression, expressed ubiquitously. Highest expression in flowers and leaves.

It localises to the nucleus. In terms of biological role, binds specifically to the plant telomeric double-stranded DNA sequences. At least 2 repeats of telomeric sequences are required for binding. Induces DNA bending. The chain is Telomere repeat-binding protein 2 (TRP2) from Arabidopsis thaliana (Mouse-ear cress).